Consider the following 381-residue polypeptide: Dihydroorotate dehydrogenase (quinone) (381 aa).

FMN-binding positions include 74 to 78 (AGFDK) and Thr-98. Lys-78 is a substrate binding site. A substrate-binding site is contributed by 123-127 (NRMGF). Residues Asn-152 and Asn-185 each coordinate FMN. Substrate is bound at residue Asn-185. Ser-188 acts as the Nucleophile in catalysis. Asn-190 lines the substrate pocket. FMN-binding residues include Lys-223 and Thr-251. Residue 252–253 (NT) participates in substrate binding. FMN is bound by residues Gly-289, Gly-318, and 339–340 (YT). The segment at 359 to 381 (RSSPPSPDVTLPPENTPVGQIQA) is disordered.

It belongs to the dihydroorotate dehydrogenase family. Type 2 subfamily. In terms of assembly, monomer. Requires FMN as cofactor.

Its subcellular location is the cell membrane. The catalysed reaction is (S)-dihydroorotate + a quinone = orotate + a quinol. The protein operates within pyrimidine metabolism; UMP biosynthesis via de novo pathway; orotate from (S)-dihydroorotate (quinone route): step 1/1. Its function is as follows. Catalyzes the conversion of dihydroorotate to orotate with quinone as electron acceptor. The sequence is that of Dihydroorotate dehydrogenase (quinone) from Synechococcus sp. (strain JA-2-3B'a(2-13)) (Cyanobacteria bacterium Yellowstone B-Prime).